Consider the following 723-residue polypeptide: DNA-binding protein RFX2 (723 aa).

A disordered region spans residues 1–46; sequence MQNSEGGADSPASVALRPSAAAPPVPASPQRVLVQAASSNPKGAQM. Positions 10-20 are enriched in low complexity; the sequence is SPASVALRPSA. Ser28 carries the post-translational modification Phosphoserine. A DNA-binding region (RFX-type winged-helix) is located at residues 199 to 274; that stretch reads HLQWLLDNYE…YHYYGIRLKP (76 aa). A disordered region spans residues 292–332; it reads QQPMHQKPRYRPAQKTDSLGDSGSHSGLHSTPEQTMAVQSQ. Over residues 308–321 the composition is skewed to low complexity; that stretch reads DSLGDSGSHSGLHS. The span at 322–332 shows a compositional bias: polar residues; the sequence is TPEQTMAVQSQ. Ser416 carries the phosphoserine modification. Residues 688–723 are disordered; that stretch reads MGDEQRGSEAGPDARSLGEPLVKRERSDPNHSLQGI.

It belongs to the RFX family. As to quaternary structure, homodimer; probably only forms homodimers in testis. Heterodimer; heterodimerizes with RFX1 and RFX3.

The protein resides in the nucleus. Its subcellular location is the cytoplasm. Transcription factor that acts as a key regulator of spermatogenesis. Acts by regulating expression of genes required for the haploid phase during spermiogenesis, such as genes required for cilium assembly and function. Recognizes and binds the X-box, a regulatory motif with DNA sequence 5'-GTNRCC(0-3N)RGYAAC-3' present on promoters. Probably activates transcription of the testis-specific histone gene H1-6. The polypeptide is DNA-binding protein RFX2 (RFX2) (Homo sapiens (Human)).